The following is an 877-amino-acid chain: Alanine--tRNA ligase (877 aa).

Zn(2+)-binding residues include histidine 563, histidine 567, cysteine 667, and histidine 671.

The protein belongs to the class-II aminoacyl-tRNA synthetase family. Requires Zn(2+) as cofactor.

It is found in the cytoplasm. It catalyses the reaction tRNA(Ala) + L-alanine + ATP = L-alanyl-tRNA(Ala) + AMP + diphosphate. Its function is as follows. Catalyzes the attachment of alanine to tRNA(Ala) in a two-step reaction: alanine is first activated by ATP to form Ala-AMP and then transferred to the acceptor end of tRNA(Ala). Also edits incorrectly charged Ser-tRNA(Ala) and Gly-tRNA(Ala) via its editing domain. This Cytophaga hutchinsonii (strain ATCC 33406 / DSM 1761 / CIP 103989 / NBRC 15051 / NCIMB 9469 / D465) protein is Alanine--tRNA ligase.